A 255-amino-acid polypeptide reads, in one-letter code: Triosephosphate isomerase (255 aa).

9–11 (NWK) is a binding site for substrate. His95 functions as the Electrophile in the catalytic mechanism. The Proton acceptor role is filled by Glu167. Residues Gly173, Ser212, and 233–234 (GG) contribute to the substrate site.

Belongs to the triosephosphate isomerase family. Homodimer.

The protein resides in the cytoplasm. The enzyme catalyses D-glyceraldehyde 3-phosphate = dihydroxyacetone phosphate. Its pathway is carbohydrate biosynthesis; gluconeogenesis. It functions in the pathway carbohydrate degradation; glycolysis; D-glyceraldehyde 3-phosphate from glycerone phosphate: step 1/1. Functionally, involved in the gluconeogenesis. Catalyzes stereospecifically the conversion of dihydroxyacetone phosphate (DHAP) to D-glyceraldehyde-3-phosphate (G3P). This Sodalis glossinidius (strain morsitans) protein is Triosephosphate isomerase.